Reading from the N-terminus, the 232-residue chain is tRNA (guanine-N(1)-)-methyltransferase (232 aa).

S-adenosyl-L-methionine contacts are provided by residues glycine 108 and 128-133 (IGDFIM).

Belongs to the RNA methyltransferase TrmD family. Homodimer.

It localises to the cytoplasm. It carries out the reaction guanosine(37) in tRNA + S-adenosyl-L-methionine = N(1)-methylguanosine(37) in tRNA + S-adenosyl-L-homocysteine + H(+). Specifically methylates guanosine-37 in various tRNAs. This Campylobacter fetus subsp. fetus (strain 82-40) protein is tRNA (guanine-N(1)-)-methyltransferase.